We begin with the raw amino-acid sequence, 181 residues long: Copper-resistant cuproprotein CopI (181 aa).

The signal sequence occupies residues 1 to 24; it reads MFPRRLLPASLIVLGVLFGASAQA. Cu(2+) is bound by residues His-79, Cys-163, His-168, and Met-173.

The protein belongs to the CopI family.

Its subcellular location is the periplasm. In terms of biological role, involved in copper tolerance. In Pseudomonas aeruginosa (strain ATCC 15692 / DSM 22644 / CIP 104116 / JCM 14847 / LMG 12228 / 1C / PRS 101 / PAO1), this protein is Copper-resistant cuproprotein CopI.